Here is a 75-residue protein sequence, read N- to C-terminus: Small ribosomal subunit protein bS18 (75 aa).

Belongs to the bacterial ribosomal protein bS18 family. Part of the 30S ribosomal subunit. Forms a tight heterodimer with protein bS6.

Binds as a heterodimer with protein bS6 to the central domain of the 16S rRNA, where it helps stabilize the platform of the 30S subunit. This is Small ribosomal subunit protein bS18 from Pasteurella multocida (strain Pm70).